We begin with the raw amino-acid sequence, 209 residues long: Ion-translocating oxidoreductase complex subunit G (209 aa).

A helical membrane pass occupies residues 9-29; that stretch reads GLILAVFACVSTGLVALTYAL. T175 is modified (FMN phosphoryl threonine).

This sequence belongs to the RnfG family. As to quaternary structure, the complex is composed of six subunits: RnfA, RnfB, RnfC, RnfD, RnfE and RnfG. FMN serves as cofactor.

It localises to the cell inner membrane. Part of a membrane-bound complex that couples electron transfer with translocation of ions across the membrane. The chain is Ion-translocating oxidoreductase complex subunit G from Vibrio cholerae serotype O1 (strain ATCC 39315 / El Tor Inaba N16961).